Reading from the N-terminus, the 81-residue chain is Conotoxin Im016 (81 aa).

A signal peptide spans M1–A21. The propeptide occupies D22–R31.

It belongs to the conotoxin N superfamily. Post-translationally, contains 5 disulfide bonds. Expressed by the venom duct.

It is found in the secreted. Its function is as follows. Probable neurotoxin. The chain is Conotoxin Im016 from Conus imperialis (Imperial cone).